The following is a 512-amino-acid chain: Histidine ammonia-lyase (512 aa).

The 5-imidazolinone (Cys-Gly) cross-link spans 143–145; the sequence is CSG. Ser144 is modified (2,3-didehydroalanine (Ser)).

Belongs to the PAL/histidase family. Contains an active site 4-methylidene-imidazol-5-one (MIO), which is formed autocatalytically by cyclization and dehydration of residues Cys-Ser-Gly.

Its subcellular location is the cytoplasm. It catalyses the reaction L-histidine = trans-urocanate + NH4(+). It functions in the pathway amino-acid degradation; L-histidine degradation into L-glutamate; N-formimidoyl-L-glutamate from L-histidine: step 1/3. The polypeptide is Histidine ammonia-lyase (Streptomyces avermitilis (strain ATCC 31267 / DSM 46492 / JCM 5070 / NBRC 14893 / NCIMB 12804 / NRRL 8165 / MA-4680)).